A 180-amino-acid polypeptide reads, in one-letter code: Large ribosomal subunit protein uL5 (180 aa).

Belongs to the universal ribosomal protein uL5 family. As to quaternary structure, part of the 50S ribosomal subunit; part of the 5S rRNA/L5/L18/L25 subcomplex. Contacts the 5S rRNA and the P site tRNA. Forms a bridge to the 30S subunit in the 70S ribosome.

Its function is as follows. This is one of the proteins that bind and probably mediate the attachment of the 5S RNA into the large ribosomal subunit, where it forms part of the central protuberance. In the 70S ribosome it contacts protein S13 of the 30S subunit (bridge B1b), connecting the 2 subunits; this bridge is implicated in subunit movement. Contacts the P site tRNA; the 5S rRNA and some of its associated proteins might help stabilize positioning of ribosome-bound tRNAs. This chain is Large ribosomal subunit protein uL5, found in Streptococcus suis (strain 05ZYH33).